The primary structure comprises 426 residues: Serine--tRNA ligase (426 aa).

233–235 (TAE) is an L-serine binding site. 264-266 (RSE) serves as a coordination point for ATP. E287 serves as a coordination point for L-serine. 351 to 354 (EISS) provides a ligand contact to ATP. S387 serves as a coordination point for L-serine.

The protein belongs to the class-II aminoacyl-tRNA synthetase family. Type-1 seryl-tRNA synthetase subfamily. In terms of assembly, homodimer. The tRNA molecule binds across the dimer.

It is found in the cytoplasm. The catalysed reaction is tRNA(Ser) + L-serine + ATP = L-seryl-tRNA(Ser) + AMP + diphosphate + H(+). It catalyses the reaction tRNA(Sec) + L-serine + ATP = L-seryl-tRNA(Sec) + AMP + diphosphate + H(+). It functions in the pathway aminoacyl-tRNA biosynthesis; selenocysteinyl-tRNA(Sec) biosynthesis; L-seryl-tRNA(Sec) from L-serine and tRNA(Sec): step 1/1. Its function is as follows. Catalyzes the attachment of serine to tRNA(Ser). Is also able to aminoacylate tRNA(Sec) with serine, to form the misacylated tRNA L-seryl-tRNA(Sec), which will be further converted into selenocysteinyl-tRNA(Sec). The polypeptide is Serine--tRNA ligase (Clostridium tetani (strain Massachusetts / E88)).